Consider the following 167-residue polypeptide: Insertion element IS1 2 protein InsB (167 aa).

It belongs to the transposase 27 family.

Its function is as follows. Absolutely required for transposition of IS1. The polypeptide is Insertion element IS1 2 protein InsB (insB2) (Escherichia coli (strain K12)).